The chain runs to 420 residues: Gamma-glutamyl phosphate reductase (420 aa).

This sequence belongs to the gamma-glutamyl phosphate reductase family.

The protein resides in the cytoplasm. The catalysed reaction is L-glutamate 5-semialdehyde + phosphate + NADP(+) = L-glutamyl 5-phosphate + NADPH + H(+). The protein operates within amino-acid biosynthesis; L-proline biosynthesis; L-glutamate 5-semialdehyde from L-glutamate: step 2/2. Catalyzes the NADPH-dependent reduction of L-glutamate 5-phosphate into L-glutamate 5-semialdehyde and phosphate. The product spontaneously undergoes cyclization to form 1-pyrroline-5-carboxylate. The sequence is that of Gamma-glutamyl phosphate reductase from Oenococcus oeni (strain ATCC BAA-331 / PSU-1).